The primary structure comprises 736 residues: Exo-oligoalginate lyase (736 aa).

Residues 1 to 23 (MLSVNTIKNTLLAAVLVSVPATA) form the signal peptide. Substrate contacts are provided by residues Lys-136, 146-149 (QSLN), Lys-198, His-202, and 257-260 (YYQR). Tyr-258 (proton donor) is an active-site residue. His-413 (proton acceptor) is an active-site residue. Zn(2+) contacts are provided by His-415 and Asp-433. Position 438 (Arg-438) interacts with substrate. Zn(2+) is bound at residue His-464. Glu-667 lines the substrate pocket.

It belongs to the polysaccharide lyase 17 family. As to quaternary structure, homodimer. The cofactor is Zn(2+).

It is found in the periplasm. The catalysed reaction is Cleavage of 4-deoxy-alpha-L-erythro-hex-4-enopyranuronoside oligosaccharides into 4-deoxy-alpha-L-erythro-hex-4-enopyranuronate monosaccharides.. Functionally, catalyzes the depolymerization of alginate through an exolytic mode of action, via a beta-elimination mechanism. Preferentially acts on oligoalginates with degrees of polymerization higher than 2 to produce the alginate monomer, 4-deoxy-L-erythro-5-hexoseulose uronic acid. The protein is Exo-oligoalginate lyase of Saccharophagus degradans (strain 2-40 / ATCC 43961 / DSM 17024).